The chain runs to 207 residues: Gap junction epsilon-1 protein (207 aa).

Over 1–22 (MSLNYIKNFYEGCLRPPTVIGQ) the chain is Cytoplasmic. A helical transmembrane segment spans residues 23–43 (FHTLFFGSVRTFFLGVLGFAV). Residues 44 to 74 (YGNEALHFSCDPDKRELNLYCYNQFRPITPQ) lie on the Extracellular side of the membrane. Intrachain disulfides connect Cys53/Cys161 and Cys64/Cys147. Residues 75-95 (VFWALQLVTVLVPGAVFHLYA) form a helical membrane-spanning segment. Over 96 to 111 (ACKNIDQEEILHRPMS) the chain is Cytoplasmic. The helical transmembrane segment at 112 to 132 (TVFYIISVLLRIILEVLAFWL) threads the bilayer. The Extracellular segment spans residues 133 to 175 (QSHLFGFLVDPIFMCDVTGLGKILNVSKCMVPEHFEKTIFLSA). A helical transmembrane segment spans residues 176–196 (MYTFTIITILLCIAEIFEILF). Residues 197–207 (RRLGYLNQPMT) lie on the Cytoplasmic side of the membrane.

The protein belongs to the connexin family. Beta-type (group I) subfamily. In terms of assembly, a connexon is composed of a hexamer of connexins.

The protein localises to the cell membrane. Has significant hemichannel activity. However, has only low-efficiency gap junction activity and probably does not function as a gap junction channel in vivo. This chain is Gap junction epsilon-1 protein, found in Danio rerio (Zebrafish).